The primary structure comprises 221 residues: MAELDFNIQATVRTDKGKGASRRLRHEDKVPAILYGGQGEPIALALDHNKVNNMADYEAFYSHIVTLEFDGKKHQAILKDMQRHPYKPKLTHLDFQRVEKGHKLHTNLPLHFLNETTAKGVKEEGGVVVHHVNDVEITVLPKDLPEYLEVDIAELSVGDTIHLTDLKLPKGVELVELTKGEDHDQAVVSITAPRVEKEETEEDTVAPGDVPAENSKDADEE.

Residues 192–221 (APRVEKEETEEDTVAPGDVPAENSKDADEE) form a disordered region.

Belongs to the bacterial ribosomal protein bL25 family. CTC subfamily. As to quaternary structure, part of the 50S ribosomal subunit; part of the 5S rRNA/L5/L18/L25 subcomplex. Contacts the 5S rRNA. Binds to the 5S rRNA independently of L5 and L18.

Functionally, this is one of the proteins that binds to the 5S RNA in the ribosome where it forms part of the central protuberance. This is Large ribosomal subunit protein bL25 from Idiomarina loihiensis (strain ATCC BAA-735 / DSM 15497 / L2-TR).